The following is a 280-amino-acid chain: 4-diphosphocytidyl-2-C-methyl-D-erythritol kinase (280 aa).

Residue Lys-8 is part of the active site. An ATP-binding site is contributed by 91 to 101; the sequence is PVSAGLAGGST. The active site involves Asp-133.

This sequence belongs to the GHMP kinase family. IspE subfamily.

The catalysed reaction is 4-CDP-2-C-methyl-D-erythritol + ATP = 4-CDP-2-C-methyl-D-erythritol 2-phosphate + ADP + H(+). It participates in isoprenoid biosynthesis; isopentenyl diphosphate biosynthesis via DXP pathway; isopentenyl diphosphate from 1-deoxy-D-xylulose 5-phosphate: step 3/6. In terms of biological role, catalyzes the phosphorylation of the position 2 hydroxy group of 4-diphosphocytidyl-2C-methyl-D-erythritol. The chain is 4-diphosphocytidyl-2-C-methyl-D-erythritol kinase from Clostridium botulinum (strain Eklund 17B / Type B).